A 466-amino-acid polypeptide reads, in one-letter code: 3-isopropylmalate dehydratase large subunit (466 aa).

[4Fe-4S] cluster-binding residues include Cys347, Cys407, and Cys410.

Belongs to the aconitase/IPM isomerase family. LeuC type 1 subfamily. As to quaternary structure, heterodimer of LeuC and LeuD. The cofactor is [4Fe-4S] cluster.

It carries out the reaction (2R,3S)-3-isopropylmalate = (2S)-2-isopropylmalate. The protein operates within amino-acid biosynthesis; L-leucine biosynthesis; L-leucine from 3-methyl-2-oxobutanoate: step 2/4. Catalyzes the isomerization between 2-isopropylmalate and 3-isopropylmalate, via the formation of 2-isopropylmaleate. This chain is 3-isopropylmalate dehydratase large subunit, found in Pseudoalteromonas translucida (strain TAC 125).